Reading from the N-terminus, the 286-residue chain is 2-hydroxy-6-oxononadienedioate/2-hydroxy-6-oxononatrienedioate hydrolase (286 aa).

The region spanning 36–271 is the AB hydrolase-1 domain; that stretch reads VIMLHGGGPG…RCGHWAQWEH (236 aa). His-265 functions as the Proton acceptor in the catalytic mechanism.

Belongs to the AB hydrolase superfamily. BphD family. Homodimer.

It carries out the reaction (2Z,4E)-2-hydroxy-6-oxonona-2,4-dienedioate + H2O = (2Z)-2-hydroxypenta-2,4-dienoate + succinate + H(+). The enzyme catalyses (2Z,4E,7E)-2-hydroxy-6-oxonona-2,4,7-trienedioate + H2O = (2Z)-2-hydroxypenta-2,4-dienoate + fumarate + H(+). The protein operates within aromatic compound metabolism; 3-phenylpropanoate degradation. Functionally, catalyzes the cleavage of the C5-C6 bond of 2-hydroxy-6-oxononadienedioate, and probably also 2-hydroxy-6-oxononatrienedioate, a dienol ring fission product of the bacterial meta-cleavage pathway for degradation of phenylpropionic acid. This Comamonas testosteroni (Pseudomonas testosteroni) protein is 2-hydroxy-6-oxononadienedioate/2-hydroxy-6-oxononatrienedioate hydrolase (mhpC).